Consider the following 981-residue polypeptide: MTEEVGQKLLESLSLFKLGDIGYARIECELLTTFLEEQLENNLDSLSIHELSTNLIRNRICCREFIESRPAKKWVFLIFRLARTLFRDKTRIATFHSVNLHSEFVQVFWRNLTYQTKSYRNCKFQTFQFIASRFLRSEHDWNVTVVNCLNVTQKLIDNGENARKFVDCNLEDAVLVLLATRQMTVLQHSLEILGRLSDWSTTCRENLCESNTIDVCLQLIPDGDILTQKLCISLLRILSCEEQAREQIRIYDGVPTLLGLLSIKNSRLQWHVAWTLAQLAEQHETSLEIAQLGGISLIFAAISNPKPPGKAVGDWVAMLTGLTALLAQLAQASSNQQLMSNANGVYILGKLLAIKKNVTTDETIDSWDLLQCSIFRVLRLMYTFERSRQLLKKVLPTEIFEKFVDVGNYNSVLTDYDQIAKMYDNLIEENIEIMKDWETVNERRQAVGEVGEYELLDQLGAGAFGCVYTVRKKAQSHSENPAKLLALKEIFMTNLNDRESDKSFGDMISEVKIIKQQLRHPNIVRYRRIFVENHRLYIVMDLIQGCSLRDLIITMKEKKGNFEEKKIWAMVVQMMLALRYLHKEKQIVHRDLKPNNIMMTTDERVVITDFGLAKQKGPEYLKSAAGTIIYSCPEIVQNLPYGEKADIWSFGCCIYEMCQLQPVFHSTNMLTLAMQIVEAKYDPLNEMWSDDLRFLITSCLAPDPSARPDILKVSGMCGVRLLEYLDDVARQQASTSDMTASQSSYNIKIDESPSSLNSSTSSYKRPGRSSKTSGSGKLPPINPAPRRNHSMSAGETPRPSSIVCLPRITDKYSVMFPSAPSAIPSRRRVQTCSTEHPARSSSSTELKVSKQSDGLTVSSNVLRQIQDPVLTILNQIHRILVVTDKETISTSMNHQRRLVEMFRKNLLGRENDAVQMKTHLRKLAAESPEEIQMNLGFSDFRPVLVQSHINGYQKDQKVTKITYEQLSACIECLIAENPAAK.

The Protein kinase domain maps to 453 to 725 (YELLDQLGAG…MCGVRLLEYL (273 aa)). ATP-binding positions include 459-467 (LGAGAFGCV) and lysine 488. Aspartate 591 functions as the Proton acceptor in the catalytic mechanism. A compositionally biased stretch (polar residues) spans 735–746 (TSDMTASQSSYN). 2 disordered regions span residues 735–802 (TSDM…PSSI) and 823–847 (IPSRRRVQTCSTEHPARSSSSTELK). Residues 752 to 762 (SPSSLNSSTSS) show a composition bias toward low complexity. The segment covering 830–847 (QTCSTEHPARSSSSTELK) has biased composition (polar residues).

The protein belongs to the protein kinase superfamily. NEK Ser/Thr protein kinase family. NIMA subfamily. Mg(2+) serves as cofactor.

The catalysed reaction is L-seryl-[protein] + ATP = O-phospho-L-seryl-[protein] + ADP + H(+). The enzyme catalyses L-threonyl-[protein] + ATP = O-phospho-L-threonyl-[protein] + ADP + H(+). The protein is Serine/threonine-protein kinase D1044.8 (nekl-4) of Caenorhabditis elegans.